Reading from the N-terminus, the 70-residue chain is U-actitoxin-Avd11a (70 aa).

A ShKT domain is found at 36 to 70 (CNDYKSSSYCRSVGSRNECGIHKYRMYCRKTCGSC). Intrachain disulfides connect cysteine 36-cysteine 70, cysteine 45-cysteine 63, and cysteine 54-cysteine 67. Positions 58-59 (KY) are crucial for binding to potassium channels.

It belongs to the sea anemone type 1 potassium channel toxin family. Type 1b subfamily.

The protein localises to the secreted. The protein resides in the nematocyst. Inhibits voltage-gated potassium channels (Kv1/KCNA). In Anemonia viridis (Snakelocks anemone), this protein is U-actitoxin-Avd11a.